Reading from the N-terminus, the 417-residue chain is UDP-N-acetylglucosamine 1-carboxyvinyltransferase 2 (417 aa).

Position 22–23 (22–23 (KN)) interacts with phosphoenolpyruvate. Residue arginine 94 coordinates UDP-N-acetyl-alpha-D-glucosamine. Residue cysteine 118 is the Proton donor of the active site. Cysteine 118 is modified (2-(S-cysteinyl)pyruvic acid O-phosphothioketal). UDP-N-acetyl-alpha-D-glucosamine-binding positions include 123 to 127 (RPIDL), aspartate 306, and isoleucine 328.

The protein belongs to the EPSP synthase family. MurA subfamily.

It localises to the cytoplasm. The enzyme catalyses phosphoenolpyruvate + UDP-N-acetyl-alpha-D-glucosamine = UDP-N-acetyl-3-O-(1-carboxyvinyl)-alpha-D-glucosamine + phosphate. It participates in cell wall biogenesis; peptidoglycan biosynthesis. In terms of biological role, cell wall formation. Adds enolpyruvyl to UDP-N-acetylglucosamine. The protein is UDP-N-acetylglucosamine 1-carboxyvinyltransferase 2 of Clostridium tetani (strain Massachusetts / E88).